We begin with the raw amino-acid sequence, 157 residues long: Small ribosomal subunit protein uS9 (157 aa).

This sequence belongs to the universal ribosomal protein uS9 family.

The polypeptide is Small ribosomal subunit protein uS9 (Caulobacter sp. (strain K31)).